Consider the following 411-residue polypeptide: Probable phosphatase HAD1 (411 aa).

Positions 14-23 are enriched in polar residues; it reads LPSPNTSQPP. Positions 14–33 are disordered; the sequence is LPSPNTSQPPSAAPSRRGSF. Asp61 serves as the catalytic Nucleophile. Asp61, Asp63, and Asp338 together coordinate Mg(2+). Asp63 (proton donor) is an active-site residue. The segment at 296-386 is disordered; the sequence is PRPTPDVTPV…QSGQAGVTLD (91 aa). The span at 326-345 shows a compositional bias: polar residues; the sequence is VRNTQTIMKGSDDLTGNDSV. The segment covering 362-373 has biased composition (basic and acidic residues); that stretch reads SVEKRAEMEFHR.

It belongs to the HAD-like hydrolase superfamily. Post-translationally, phosphorylated.

Probable phosphatase. Required for cell wall integrity and virulence. This is Probable phosphatase HAD1 from Cryptococcus neoformans var. grubii serotype A (strain H99 / ATCC 208821 / CBS 10515 / FGSC 9487) (Filobasidiella neoformans var. grubii).